Consider the following 125-residue polypeptide: MREIKTPKAPVPVGPYSQAVEVNGFLFISGQIGINPETGKLVEGFKEQVIQIFKNVDAILEEAGLKRENIVKVTIYITDIKKFKELNEIYEDYFKDVSVKPARVTVGVKELPLNAEVEIEIVAVK.

Belongs to the RutC family.

The sequence is that of RutC family protein aq_364 from Aquifex aeolicus (strain VF5).